The chain runs to 285 residues: MERKRWECPALPQGWEREEVPRRSGLSAGHRDVFYYSPSGKKFRSKPQLARYLGGSMDLSTFDFRTGKMLMNKMNKSRQRVRYDSSNQVKGKPDLNTALPVRQTASIFKQPVTKITNHPSNKVKSDPQKAVDQPRQLFWEKKLSGLSAFDIAEELVRTMDLPKGLQGVGPGCTDETLLSAIASALHTSTLPITGQLSAAVEKNPGVWLNTAQPLCKAFMVTDDDIRKQEELVQQVRKRLEEALMADMLAHVEELARDGEAPLDKACAEEEEEEEEEEEEPEPERV.

In terms of domain architecture, MBD spans 1-69 (MERKRWECPA…STFDFRTGKM (69 aa)). S56 carries the post-translational modification Phosphoserine. A Glycyl lysine isopeptide (Lys-Gly) (interchain with G-Cter in SUMO2) cross-link involves residue K73. A Phosphoserine modification is found at S85. Residues K90 and K92 each participate in a glycyl lysine isopeptide (Lys-Gly) (interchain with G-Cter in SUMO2) cross-link. Residue S144 is modified to Phosphoserine. Positions 221-279 (TDDDIRKQEELVQQVRKRLEEALMADMLAHVEELARDGEAPLDKACAEEEEEEEEEEEE) form a coiled coil. A compositionally biased stretch (basic and acidic residues) spans 255–267 (ARDGEAPLDKACA). Positions 255–285 (ARDGEAPLDKACAEEEEEEEEEEEEPEPERV) are disordered. Over residues 268–285 (EEEEEEEEEEEEPEPERV) the composition is skewed to acidic residues.

As to quaternary structure, heterodimer (via N-terminus) with MBD2. Component of the MeCP1 histone deacetylase complex. Component of the nucleosome remodeling and deacetylase (NuRD) repressor complex, composed of core proteins MTA1, MTA2, MTA3, RBBP4, RBBP7, HDAC1, HDAC2, MBD2, MBD3, and peripherally associated proteins CDK2AP1, CDK2AP2, GATAD2A, GATAD2B, CHD3, CHD4 and CHD5. The exact stoichiometry of the NuRD complex is unknown, and some subunits such as MBD2 and MBD3, GATAD2A and GATAD2B, and CHD3, CHD4 and CHD5 define mutually exclusive NuRD complexes. Interacts with MBD3L2 (via N-terminus); the interaction is direct. Interacts with BCL6. Interacts with CDK2AP1. Interacts with HDAC1. Interacts with MTA2. Interacts with DNMT1. Interacts with GATAD2A. Interacts with GATAD2B. Does not interact with PWWP2A. Does not interact with PWWP2B. Highly expressed in brain, heart, kidney, liver, lung, skeletal muscle, spleen and testis. Detected at lower levels in embryonic stem cells.

Its subcellular location is the nucleus. The protein localises to the chromosome. Acts as a component of the histone deacetylase NuRD complex which participates in the remodeling of chromatin. Acts as transcriptional repressor and plays a role in gene silencing. Does not bind methylated DNA by itself. Binds to a lesser degree DNA containing unmethylated CpG dinucleotides. Recruits histone deacetylases and DNA methyltransferases. The protein is Methyl-CpG-binding domain protein 3 (Mbd3) of Mus musculus (Mouse).